The primary structure comprises 320 residues: Beta-ketoacyl-[acyl-carrier-protein] synthase III (320 aa).

Active-site residues include Cys114 and His247. Residues 248-252 are ACP-binding; that stretch reads QANRR. Asn277 is a catalytic residue.

This sequence belongs to the thiolase-like superfamily. FabH family. In terms of assembly, homodimer.

It is found in the cytoplasm. The enzyme catalyses malonyl-[ACP] + acetyl-CoA + H(+) = 3-oxobutanoyl-[ACP] + CO2 + CoA. The protein operates within lipid metabolism; fatty acid biosynthesis. Catalyzes the condensation reaction of fatty acid synthesis by the addition to an acyl acceptor of two carbons from malonyl-ACP. Catalyzes the first condensation reaction which initiates fatty acid synthesis and may therefore play a role in governing the total rate of fatty acid production. Possesses both acetoacetyl-ACP synthase and acetyl transacylase activities. Its substrate specificity determines the biosynthesis of branched-chain and/or straight-chain of fatty acids. The sequence is that of Beta-ketoacyl-[acyl-carrier-protein] synthase III from Neisseria meningitidis serogroup B (strain ATCC BAA-335 / MC58).